Consider the following 122-residue polypeptide: Small ribosomal subunit protein uS13 (122 aa).

The tract at residues 94–122 is disordered; the sequence is LSLPVRGQRTKTNSRTRKGKRKTVAGKKK. The span at 101–122 shows a compositional bias: basic residues; the sequence is QRTKTNSRTRKGKRKTVAGKKK.

This sequence belongs to the universal ribosomal protein uS13 family. In terms of assembly, part of the 30S ribosomal subunit. Forms a loose heterodimer with protein S19. Forms two bridges to the 50S subunit in the 70S ribosome.

Located at the top of the head of the 30S subunit, it contacts several helices of the 16S rRNA. In the 70S ribosome it contacts the 23S rRNA (bridge B1a) and protein L5 of the 50S subunit (bridge B1b), connecting the 2 subunits; these bridges are implicated in subunit movement. Contacts the tRNAs in the A and P-sites. The protein is Small ribosomal subunit protein uS13 of Chlamydia muridarum (strain MoPn / Nigg).